A 768-amino-acid polypeptide reads, in one-letter code: Vacuolar basic amino acid transporter 4 (768 aa).

Residues 1–252 are Cytoplasmic-facing; that stretch reads MGKKDRQRKK…HDLTRRRIFS (252 aa). A coiled-coil region spans residues 9 to 40; the sequence is KKLREFAKLKNRQRNLRKSVQTLKNEVQREAK. Positions 34–172 are disordered; the sequence is EVQREAKVPR…ELPVSSSNSF (139 aa). A phosphoserine mark is found at serine 62, serine 99, and serine 106. The segment covering 110 to 121 has biased composition (basic and acidic residues); the sequence is KPADKANEDDLK. A compositionally biased stretch (polar residues) spans 132–159; that stretch reads SALQSSITDFSDRSVSPLQSITSCNTPM. A phosphoserine mark is found at serine 160 and serine 192. Residues 253–273 form a helical membrane-spanning segment; it reads SCMCTYLFFIAMDSSIILVIA. Over 274–282 the chain is Vacuolar; sequence SKIASEFHE. A helical membrane pass occupies residues 283 to 305; that stretch reads LWRLSLVISAYLLSNAIGQLVFL. Residues 306-311 are Cytoplasmic-facing; that stretch reads KLSLIS. The chain crosses the membrane as a helical span at residues 312 to 331; the sequence is SVKLLLCIAQFSFILGGYLS. Topologically, residues 332–334 are vacuolar; sequence WSS. A helical membrane pass occupies residues 335–357; the sequence is AHFWTFIFARCVTGFGGGSLIAL. Residues 358–375 are Cytoplasmic-facing; that stretch reads KSTIMNRFSQKNDSRYSL. Residues 376 to 396 traverse the membrane as a helical segment; the sequence is SASMITFAMGVVIGPFMMNLF. At 397–406 the chain is on the vacuolar side; sequence DSSHGSGWRN. Residues 407–427 form a helical membrane-spanning segment; that stretch reads AFLIPVPFCLVNASIMLADMY. Over 428-447 the chain is Cytoplasmic; sequence SVKSTLYGRPTPTLWKRFKN. Residues 448–468 traverse the membrane as a helical segment; that stretch reads TLLSPDLYEILTLTLFLLCFV. Residues 469-481 lie on the Vacuolar side of the membrane; that stretch reads QVTSLDLTGLKNN. Asparagine 480 carries N-linked (GlcNAc...) asparagine glycosylation. The helical transmembrane segment at 482–502 threads the bilayer; the sequence is TMIQALLFSVIIVCGILFFLI. Topologically, residues 503–522 are cytoplasmic; the sequence is ETSDTYMNSVISMSLQGDKR. A helical membrane pass occupies residues 523–543; it reads LIWTMIGISFCFAALMCIIPF. Residues 544 to 562 are Vacuolar-facing; that stretch reads GTTYFIIVLNLSTLQLAER. N-linked (GlcNAc...) asparagine glycosylation occurs at asparagine 553. Residues 563 to 583 traverse the membrane as a helical segment; that stretch reads LSPFFFSIVLGYFSVSYFWKS. The Cytoplasmic segment spans residues 584 to 587; it reads KGQN. A helical membrane pass occupies residues 588 to 608; that stretch reads FLLKFVLSGATLLLYVALMGV. Residues 609–617 lie on the Vacuolar side of the membrane; sequence SLNLPVWKQ. Residues 618–638 traverse the membrane as a helical segment; that stretch reads YICLSLPFLGSSMILTLLSNL. Residues 639 to 653 lie on the Cytoplasmic side of the membrane; it reads YHEYHEQRKSPISGS. A helical transmembrane segment spans residues 654–674; that stretch reads IVYCFGAVGGTVGISLGGYVF. The Vacuolar portion of the chain corresponds to 675 to 734; it reads HKTLIKLMHEKVMPFSKQGYLKKDLLKIIKHATESSDWVHESAPKFVFQTLIECYLQACR. The chain crosses the membrane as a helical span at residues 735–755; it reads NVFKLSTLFFTITVVAIFIFN. Residues 756 to 768 are Cytoplasmic-facing; the sequence is RIHCRSQNCLSLS.

Belongs to the major facilitator superfamily.

Its subcellular location is the vacuole membrane. In terms of biological role, transporter required for vacuolar uptake of basic amino acids. This Saccharomyces cerevisiae (strain ATCC 204508 / S288c) (Baker's yeast) protein is Vacuolar basic amino acid transporter 4 (VBA4).